Consider the following 152-residue polypeptide: Transcriptional regulator MraZ (152 aa).

SpoVT-AbrB domains lie at 5–52 (INAI…TAAQ) and 81–124 (ATDV…NKEL).

It belongs to the MraZ family. As to quaternary structure, forms oligomers.

It localises to the cytoplasm. The protein localises to the nucleoid. The polypeptide is Transcriptional regulator MraZ (Legionella pneumophila (strain Paris)).